A 66-amino-acid polypeptide reads, in one-letter code: Large ribosomal subunit protein bL33c (66 aa).

Belongs to the bacterial ribosomal protein bL33 family.

Its subcellular location is the plastid. It localises to the chloroplast. The chain is Large ribosomal subunit protein bL33c from Lepidium virginicum (Virginia pepperweed).